A 150-amino-acid polypeptide reads, in one-letter code: UPF0178 protein PC1_0756 (150 aa).

Belongs to the UPF0178 family.

The polypeptide is UPF0178 protein PC1_0756 (Pectobacterium carotovorum subsp. carotovorum (strain PC1)).